The sequence spans 25 residues: Caerin-2.3 (25 aa).

As to expression, expressed by the skin parotoid and/or rostral glands.

Its subcellular location is the secreted. In terms of biological role, acts as a male sex pheromone that attracts females. Has no antimicrobial activity. The sequence is that of Caerin-2.3 from Ranoidea caerulea (Green tree frog).